We begin with the raw amino-acid sequence, 1408 residues long: ABC multidrug transporter MDR1 (1408 aa).

Polar residues predominate over residues Ile-79–Asn-88. The segment at Ile-79 to Ser-102 is disordered. The next 2 membrane-spanning stretches (helical) occupy residues Phe-147 to Gly-167 and Leu-223 to Trp-243. Residues Val-157–Lys-464 enclose the ABC transmembrane type-1 1 domain. An N-linked (GlcNAc...) asparagine glycan is attached at Asn-244. Transmembrane regions (helical) follow at residues Lys-296–Val-316, Leu-321–Thr-341, Ile-408–Val-428, and Gly-436–Ala-456. Residues Ile-499–Asn-744 enclose the ABC transporter 1 domain. Gly-534 to Ser-541 contributes to the ATP binding site. Asn-606 carries an N-linked (GlcNAc...) asparagine glycan. Helical transmembrane passes span Ile-838–Phe-858 and Leu-882–Phe-902. One can recognise an ABC transmembrane type-1 2 domain in the interval Ile-838 to Lys-1125. A glycan (N-linked (GlcNAc...) asparagine) is linked at Asn-934. Helical transmembrane passes span Gly-952 to Cys-972, Leu-981 to Ile-999, Gly-1072 to Ala-1092, and Phe-1099 to Phe-1119. Residues Asn-1127 and Asn-1182 are each glycosylated (N-linked (GlcNAc...) asparagine). The ABC transporter 2 domain occupies Val-1162 to Met-1402. Gly-1197–Ser-1204 provides a ligand contact to ATP. An N-linked (GlcNAc...) asparagine glycan is attached at Asn-1404.

Belongs to the ABC transporter superfamily. ABCB family. Multidrug resistance exporter (TC 3.A.1.201) subfamily.

It is found in the cell membrane. It catalyses the reaction itraconazole(in) + ATP + H2O = itraconazole(out) + ADP + phosphate + H(+). The enzyme catalyses voriconazole(in) + ATP + H2O = voriconazole(out) + ADP + phosphate + H(+). It carries out the reaction fluconazole(in) + ATP + H2O = fluconazole(out) + ADP + phosphate + H(+). Its function is as follows. Pleiotropic ABC efflux transporter that confers resistance to structurally and functionally unrelated compounds including azoles such as fluconazole (FLC), itraconazole (ITC), posaconazole (POS), and voriconazole (VRC). The sequence is that of ABC multidrug transporter MDR1 from Cryptococcus neoformans var. grubii serotype A (strain H99 / ATCC 208821 / CBS 10515 / FGSC 9487) (Filobasidiella neoformans var. grubii).